The primary structure comprises 514 residues: LWamide neuropeptides (514 aa).

A signal peptide spans 1–22 (MALKCHLVLLAITLLLAQCSGS). Basic and acidic residues predominate over residues 23–53 (VDKKDSTTNHLDEKKTDSTEAHIVQETDALK). The propeptide occupies 23–75 (VDKKDSTTNHLDEKKTDSTEAHIVQETDALKENSYLGAEEESKEEDKKRSAAP). Positions 23 to 180 (VDKKDSTTNH…PGLWGRSADA (158 aa)) are disordered. Tryptophan amide occurs at positions 81 and 90. The propeptide occupies 93 to 97 (SADAG). Tryptophan amide occurs at positions 102 and 111. Residues 114–118 (SADAG) constitute a propeptide that is removed on maturation. A tryptophan amide mark is found at W123 and W132. A propeptide spanning residues 135–139 (SADAG) is cleaved from the precursor. Tryptophan amide is present on residues W144 and W153. A propeptide spanning residues 156-160 (SADAG) is cleaved from the precursor. Tryptophan amide occurs at positions 165 and 174. A propeptide spanning residues 177-181 (SADAR) is cleaved from the precursor. W186 bears the Tryptophan amide mark. Positions 190 to 199 (EIYALWGGKR) are excised as a propeptide. A Tryptophan amide modification is found at W205. The propeptide occupies 208 to 212 (SADPG). Residue W217 is modified to Tryptophan amide. The propeptide occupies 221-230 (ELVGLWGGKR). Position 236 is a tryptophan amide (W236). Residues 239 to 243 (SAEAG) constitute a propeptide that is removed on maturation. A tryptophan amide mark is found at W248 and W257. Residues 258–475 (GRSADPLQPG…GRSAGSGQLG (218 aa)) are disordered. Residues 260-264 (SADPL) constitute a propeptide that is removed on maturation. W269 and W278 each carry tryptophan amide. Positions 281–284 (SADP) are excised as a propeptide. 2 positions are modified to tryptophan amide: W290 and W299. The propeptide occupies 302-305 (SADP). Residues W311 and W320 each carry the tryptophan amide modification. Positions 323-326 (SADP) are excised as a propeptide. 2 positions are modified to tryptophan amide: W332 and W341. The propeptide occupies 344 to 347 (SADP). W353 is modified (tryptophan amide). Positions 356–366 (SPGLWGRSADP) are excised as a propeptide. W372 is modified (tryptophan amide). A propeptide spanning residues 376 to 387 (QNPGFWGRSADP) is cleaved from the precursor. Tryptophan amide is present on residues W393 and W402. A propeptide spanning residues 405-408 (SADP) is cleaved from the precursor. 2 positions are modified to tryptophan amide: W414 and W423. A propeptide spanning residues 426–429 (SADP) is cleaved from the precursor. W435 and W444 each carry tryptophan amide. A propeptide spanning residues 447 to 450 (SADP) is cleaved from the precursor. A tryptophan amide mark is found at W456 and W465. A propeptide spanning residues 468 to 472 (SAGSG) is cleaved from the precursor. Tryptophan amide occurs at positions 477 and 487. Positions 489–514 (RSAEPPQFEDLEDLKKKSAIPQPKGQ) are disordered. Positions 490–514 (SAEPPQFEDLEDLKKKSAIPQPKGQ) are excised as a propeptide.

Belongs to the LWamide neuropeptide family.

The protein localises to the secreted. Functionally, metamorphosin A may be part of an internal signaling system involved in control of metamorphosis. This Anthopleura elegantissima (Green aggregating anemone) protein is LWamide neuropeptides.